We begin with the raw amino-acid sequence, 714 residues long: Polyribonucleotide nucleotidyltransferase (714 aa).

Asp-488 and Asp-494 together coordinate Mg(2+). The KH domain maps to 555-614 (PRIEVMNIPVDKIREVIGSGGKVIREIVEKTGAKINIDDDGTVKIASASGKEIEAARKWI). An S1 motif domain is found at 624–692 (GQVYEGTVVK…ERGKVRLSMK (69 aa)).

The protein belongs to the polyribonucleotide nucleotidyltransferase family. Mg(2+) serves as cofactor.

It localises to the cytoplasm. The catalysed reaction is RNA(n+1) + phosphate = RNA(n) + a ribonucleoside 5'-diphosphate. In terms of biological role, involved in mRNA degradation. Catalyzes the phosphorolysis of single-stranded polyribonucleotides processively in the 3'- to 5'-direction. The polypeptide is Polyribonucleotide nucleotidyltransferase (Sinorhizobium medicae (strain WSM419) (Ensifer medicae)).